Reading from the N-terminus, the 69-residue chain is Pancreatic secretory trypsin inhibitor (69 aa).

Residues 8–65 (TGTEAACSNYDLKKGCAKIFDPVCGTDNILYSNECLLCFQNLQRKTNVRIKRRGTCQE) enclose the Kazal-like domain. Cystine bridges form between C14/C45, C23/C42, and C31/C63.

The protein resides in the secreted. This is a trypsin inhibitor, its physiological function is to prevent the trypsin-catalyzed premature activation of zymogens within the pancreas. The sequence is that of Pancreatic secretory trypsin inhibitor (SPINK1) from Struthio camelus (Common ostrich).